The chain runs to 527 residues: Peptide chain release factor 3 (527 aa).

The tr-type G domain occupies 9 to 277 (AKRRTFAIIS…AVVDWAPRPL (269 aa)). GTP is bound by residues 18–25 (SHPDAGKT), 86–90 (DTPGH), and 140–143 (NKLD).

It belongs to the TRAFAC class translation factor GTPase superfamily. Classic translation factor GTPase family. PrfC subfamily.

The protein resides in the cytoplasm. Increases the formation of ribosomal termination complexes and stimulates activities of RF-1 and RF-2. It binds guanine nucleotides and has strong preference for UGA stop codons. It may interact directly with the ribosome. The stimulation of RF-1 and RF-2 is significantly reduced by GTP and GDP, but not by GMP. This Pseudomonas fluorescens (strain Pf0-1) protein is Peptide chain release factor 3.